A 570-amino-acid chain; its full sequence is Formate--tetrahydrofolate ligase (570 aa).

65–72 (TPHGEGKT) is an ATP binding site.

The protein belongs to the formate--tetrahydrofolate ligase family.

It carries out the reaction (6S)-5,6,7,8-tetrahydrofolate + formate + ATP = (6R)-10-formyltetrahydrofolate + ADP + phosphate. It participates in one-carbon metabolism; tetrahydrofolate interconversion. The polypeptide is Formate--tetrahydrofolate ligase (Shewanella sp. (strain ANA-3)).